The sequence spans 489 residues: Cysteine--tRNA ligase (489 aa).

A Zn(2+)-binding site is contributed by cysteine 27. The 'HIGH' region motif lies at 29–39 (VTVYDLCHLGH). Zn(2+) contacts are provided by cysteine 211, histidine 236, and glutamate 240. A 'KMSKS' region motif is present at residues 268–272 (KMSKS). Position 271 (lysine 271) interacts with ATP.

It belongs to the class-I aminoacyl-tRNA synthetase family. As to quaternary structure, monomer. Requires Zn(2+) as cofactor.

It localises to the cytoplasm. The catalysed reaction is tRNA(Cys) + L-cysteine + ATP = L-cysteinyl-tRNA(Cys) + AMP + diphosphate. In Prochlorococcus marinus (strain AS9601), this protein is Cysteine--tRNA ligase.